The primary structure comprises 827 residues: MENPQDIFSSNGGCLSDIVIEKYLVESKESVSHVQLACSMQDCAFPLDGTELCIWNTKDPSHQLLILRGHHQPITAMAFGNKVNPLLICSASLDYVIMWNLDECREKVLQGLVPRGTVMGSLLGKVLCLQLSLDDHVVAVCAGNKIFMLDIETQAVRAELQGHLGPVTAVEFCPWRAGTLISASEDRGFKVWDHCTGSLIYSSSVLSAYPLLSLFIDAESRQLVTGCADGQLWIFSLMDGHHYRRVARVDLRKKTETFSTRRVKSGLCSQPEESQLPSTSALGKGEQVEVTFPVLRLAPCDLSLIPNSACGCLSSENTRCVWIGSSVGLFVFNLANLEVEAALYYKDFQSLSILLAGSCALRNRTADQKVLCLLASLFGGKIAVLEINPAALVRAQQCPSMGQSLSVPASSCVLPTSPLYLGIAKEKSTKAASEQRRAARNVMKDQRLVFHSKVRSSGYASAPHVTMFSPKTNIKSEGKGSSRSRSSCAREAYPVECAVPTKPGPQVAAAPTCTRVCCIQYSGDGQWLACGLANHLLLVFDASLTGTPAVFSGHDGAVNAVCWSQDRRWLLSAARDGTLRMWSARGAELALLLGKDMFSKPIQSAQFYYIDAFILLSSGPEFQLLRYHIDTCKDEIKRYKQKSKSKLICRLSTTGAVDMTSLSAVNDFYSHIVLAAGRNRTVEVFDLNAGCSAAVIAEAHSRPVHQICQNKGSSFTTQQPQAYNLFLTTAIGDGMRLWDLRTLRCERHFEGHPTRGYPCGIAFSPCGRFAACGAEDRHAYVYEMGSSTFSHRLAGHTDTVTGVAFNPSAPQLATATLDGKLQLFLAE.

14 WD repeats span residues asparagine 3–threonine 57, histidine 62–leucine 101, leucine 112–isoleucine 151, alanine 155–histidine 194, tyrosine 201–leucine 237, phenylalanine 292–leucine 337, tyrosine 344–isoleucine 387, lysine 502–alanine 542, glycine 546–alanine 584, alanine 590–isoleucine 629, lysine 646–leucine 687, glutamate 698–leucine 740, glutamate 746–methionine 784, and threonine 788–alanine 826.

The chain is WD repeat-containing protein 27 (WDR27) from Homo sapiens (Human).